Reading from the N-terminus, the 254-residue chain is uncharacterized protein (254 aa).

This sequence belongs to the methyltransferase superfamily.

This is an uncharacterized protein from Mycobacterium bovis (strain ATCC BAA-935 / AF2122/97).